Consider the following 588-residue polypeptide: Tripartite motif-containing protein 29 (588 aa).

The segment at Met-1–Arg-66 is disordered. 4 positions are modified to phosphoserine: Ser-21, Ser-28, Ser-58, and Ser-104. Phosphotyrosine is present on Tyr-106. A B box-type zinc finger spans residues Phe-220 to Val-260. The Zn(2+) site is built by Cys-225, His-228, Cys-247, and His-252. The stretch at Thr-259–Glu-352 forms a coiled coil. Thr-476 carries the post-translational modification Phosphothreonine. Ser-489 bears the Phosphoserine mark.

In terms of assembly, interacts with VIM and HINT1. Interacts with IKBKG/NEMO. Interacts with STING1. Constitutively phosphorylated by PKC on serine/threonine in A431 cells. In terms of tissue distribution, expressed in placenta, prostate and thymus.

The protein localises to the cytoplasm. The protein resides in the lysosome. In terms of biological role, plays a crucial role in the regulation of macrophage activation in response to viral or bacterial infections within the respiratory tract. Mechanistically, TRIM29 interacts with IKBKG/NEMO in the lysosome where it induces its 'Lys-48' ubiquitination and subsequent degradation. In turn, the expression of type I interferons and the production of pro-inflammatory cytokines are inhibited. Additionally, induces the 'Lys-48' ubiquitination of STING1 in a similar way, leading to its degradation. This is Tripartite motif-containing protein 29 (TRIM29) from Homo sapiens (Human).